Consider the following 557-residue polypeptide: Dihydroxy-acid dehydratase (557 aa).

Asp78 contacts Mg(2+). Residue Cys119 coordinates [2Fe-2S] cluster. Positions 120 and 121 each coordinate Mg(2+). Lys121 is modified (N6-carboxylysine). Cys192 lines the [2Fe-2S] cluster pocket. Glu442 serves as a coordination point for Mg(2+). Ser468 functions as the Proton acceptor in the catalytic mechanism.

The protein belongs to the IlvD/Edd family. As to quaternary structure, homodimer. [2Fe-2S] cluster serves as cofactor. The cofactor is Mg(2+).

The catalysed reaction is (2R)-2,3-dihydroxy-3-methylbutanoate = 3-methyl-2-oxobutanoate + H2O. It carries out the reaction (2R,3R)-2,3-dihydroxy-3-methylpentanoate = (S)-3-methyl-2-oxopentanoate + H2O. It participates in amino-acid biosynthesis; L-isoleucine biosynthesis; L-isoleucine from 2-oxobutanoate: step 3/4. The protein operates within amino-acid biosynthesis; L-valine biosynthesis; L-valine from pyruvate: step 3/4. In terms of biological role, functions in the biosynthesis of branched-chain amino acids. Catalyzes the dehydration of (2R,3R)-2,3-dihydroxy-3-methylpentanoate (2,3-dihydroxy-3-methylvalerate) into 2-oxo-3-methylpentanoate (2-oxo-3-methylvalerate) and of (2R)-2,3-dihydroxy-3-methylbutanoate (2,3-dihydroxyisovalerate) into 2-oxo-3-methylbutanoate (2-oxoisovalerate), the penultimate precursor to L-isoleucine and L-valine, respectively. The protein is Dihydroxy-acid dehydratase of Bacillus anthracis (strain A0248).